Consider the following 65-residue polypeptide: Toxin VmKTx1 (65 aa).

Positions 1–21 are cleaved as a signal peptide; sequence MKTSCLLTILLLSFLVAVAVA. Positions 22–28 are excised as a propeptide; that stretch reads EGERSAR. 4 cysteine pairs are disulfide-bonded: Cys-34–Cys-54, Cys-40–Cys-59, Cys-44–Cys-61, and Cys-49–Cys-64. Cys-64 is modified (cysteine amide).

Belongs to the short scorpion toxin superfamily. Potassium channel inhibitor family. Alpha-KTx 23 subfamily. In terms of tissue distribution, expressed by the venom gland.

Its subcellular location is the secreted. In terms of biological role, voltage-gated potassium channel inhibitor. Selectively and reversibly binds (Kd=0.77 nM) and blocks hKv1.3/KCNA3 potassium channels of human T-lymphocytes. Also shows a very weak effect on hKv1.2/KCNA2 (Kd=7.1 uM). Also reduces the fraction of CD40L expressing T cells that are stimulated by alphaCD3/alphaCD28. This chain is Toxin VmKTx1, found in Vaejovis mexicanus smithi (Mexican scorpion).